A 502-amino-acid chain; its full sequence is UDP-N-acetylmuramate--L-alanine ligase (502 aa).

120–126 (GTHGKTS) contacts ATP.

It belongs to the MurCDEF family.

It is found in the cytoplasm. It carries out the reaction UDP-N-acetyl-alpha-D-muramate + L-alanine + ATP = UDP-N-acetyl-alpha-D-muramoyl-L-alanine + ADP + phosphate + H(+). It functions in the pathway cell wall biogenesis; peptidoglycan biosynthesis. Its function is as follows. Cell wall formation. The chain is UDP-N-acetylmuramate--L-alanine ligase from Rhodococcus erythropolis (strain PR4 / NBRC 100887).